The chain runs to 514 residues: Protein translocase subunit SecD (514 aa).

The next 5 membrane-spanning stretches (helical) occupy residues 7–27 (WKIF…LPNF), 357–377 (IIGF…LGLF), 389–409 (VLAL…AGII), 448–470 (FATI…IFGV), and 482–502 (IGII…IDIW).

Belongs to the SecD/SecF family. SecD subfamily. In terms of assembly, forms a complex with SecF. Part of the essential Sec protein translocation apparatus which comprises SecA, SecYEG and auxiliary proteins SecDF-YajC and YidC.

It localises to the cell inner membrane. Functionally, part of the Sec protein translocase complex. Interacts with the SecYEG preprotein conducting channel. SecDF uses the proton motive force (PMF) to complete protein translocation after the ATP-dependent function of SecA. This Rickettsia bellii (strain RML369-C) protein is Protein translocase subunit SecD.